A 146-amino-acid polypeptide reads, in one-letter code: MRNEMHLQFSARSENESFARVTVAAFVAQLDPTIDELTEIKTVVSEAVTNAIIHGYNNDPNGIVFISVVIEDGIVHLTVRDEGVGIANIDEARQPLFTTKPELERSGMGFTIMENFMDEVVVESEVNKGTTVYLKKHIAKSKALCN.

It belongs to the anti-sigma-factor family.

It catalyses the reaction L-seryl-[protein] + ATP = O-phospho-L-seryl-[protein] + ADP + H(+). The enzyme catalyses L-threonyl-[protein] + ATP = O-phospho-L-threonyl-[protein] + ADP + H(+). Functionally, binds to sigma F and blocks its ability to form an RNA polymerase holoenzyme (E-sigma F). Phosphorylates SpoIIAA on a serine residue. This phosphorylation may enable SpoIIAA to act as an anti-anti-sigma factor that counteracts SpoIIAB and thus releases sigma F from inhibition. This is Anti-sigma F factor from Geobacillus thermodenitrificans (strain NG80-2).